A 292-amino-acid chain; its full sequence is Hypoxia responsive morphology factor A (292 aa).

The short motif at 48 to 70 (RRNGRRRNLEYVAQHRRKIARKI) is the Bipartite nuclear localization signal element. The RNA recognition motif (RRM)-like domain stretch occupies residues 156 to 186 (GKEHYSLHLSTLPAIRNAFGDVIFDAIERSP).

This sequence belongs to the hrmA family.

The protein resides in the nucleus. In terms of biological role, hypoxia responsive morphology factor that modulates the expression of the subtelomeric hrmA-associated cluster (HAC) containing genes that alter the hyphal surface (such as reduced total chitin or increased beta-glucan exposure) and perturb inter-hyphal interactions within the developing biofilms, resulting in a loss of vertically aligned polarized growing filaments. Consequently, this hypoxia-typic morphotype (called H-MORPH) with altered biofilm architecture leads to increased hypoxia fitness, increased host inflammation, rapid disease progression, and mortality in a murine model of invasive aspergillosis. This is Hypoxia responsive morphology factor A from Aspergillus fumigatus (strain CBS 144.89 / FGSC A1163 / CEA10) (Neosartorya fumigata).